A 106-amino-acid chain; its full sequence is Iron-sulfur cluster assembly protein CyaY (106 aa).

This sequence belongs to the frataxin family.

Involved in iron-sulfur (Fe-S) cluster assembly. May act as a regulator of Fe-S biogenesis. The sequence is that of Iron-sulfur cluster assembly protein CyaY from Colwellia psychrerythraea (strain 34H / ATCC BAA-681) (Vibrio psychroerythus).